Here is a 351-residue protein sequence, read N- to C-terminus: UDP-3-O-acylglucosamine N-acyltransferase (351 aa).

H240 serves as the catalytic Proton acceptor.

This sequence belongs to the transferase hexapeptide repeat family. LpxD subfamily. In terms of assembly, homotrimer.

The enzyme catalyses a UDP-3-O-[(3R)-3-hydroxyacyl]-alpha-D-glucosamine + a (3R)-hydroxyacyl-[ACP] = a UDP-2-N,3-O-bis[(3R)-3-hydroxyacyl]-alpha-D-glucosamine + holo-[ACP] + H(+). It functions in the pathway bacterial outer membrane biogenesis; LPS lipid A biosynthesis. Functionally, catalyzes the N-acylation of UDP-3-O-acylglucosamine using 3-hydroxyacyl-ACP as the acyl donor. Is involved in the biosynthesis of lipid A, a phosphorylated glycolipid that anchors the lipopolysaccharide to the outer membrane of the cell. The polypeptide is UDP-3-O-acylglucosamine N-acyltransferase (Pseudomonas fluorescens (strain Pf0-1)).